The chain runs to 1265 residues: Stromal processing peptidase, chloroplastic (1265 aa).

The N-terminal 143 residues, 1–143 (MASSSSSIFT…SLRKHSQIVN (143 aa)), are a transit peptide targeting the chloroplast. His240 provides a ligand contact to Zn(2+). Residue Glu243 is the Proton acceptor of the active site. His244 provides a ligand contact to Zn(2+). Residue Glu314 is part of the active site. Glu321 provides a ligand contact to Zn(2+).

It belongs to the peptidase M16 family. The cofactor is Zn(2+).

The protein localises to the plastid. Its subcellular location is the chloroplast stroma. Cleaves presequences (transit peptides) from chloroplastic protein precursors. Initially recognizes a precursor by binding to the C-terminus of its transit peptide and then removes the transit peptide in a single endoproteolytic step. In a next step, pursues the cleavage of transit peptide to a subfragment form. The chain is Stromal processing peptidase, chloroplastic from Arabidopsis thaliana (Mouse-ear cress).